A 111-amino-acid chain; its full sequence is MSDIFRFDTEEQTLTKEKIKLKKPSKYRVIILNDDFTPMEFVVWILQMVFHRSRAESQQIMLKAHITGKALCGVYSHDVARTKVAQVQQLAEQHGYPLHCTMEVEEGEEES.

This sequence belongs to the ClpS family. Binds to the N-terminal domain of the chaperone ClpA.

Functionally, involved in the modulation of the specificity of the ClpAP-mediated ATP-dependent protein degradation. The sequence is that of ATP-dependent Clp protease adapter protein ClpS from Leptospira interrogans serogroup Icterohaemorrhagiae serovar copenhageni (strain Fiocruz L1-130).